The primary structure comprises 408 residues: Tyrosine--tRNA ligase (408 aa).

Tyr-35 serves as a coordination point for L-tyrosine. The short motif at 40-49 is the 'HIGH' region element; sequence PTADSLHVGH. The L-tyrosine site is built by Tyr-168 and Gln-172. The 'KMSKS' region motif lies at 228–232; it reads KMGKT. Position 231 (Lys-231) interacts with ATP. Residues 342-407 form the S4 RNA-binding domain; that stretch reads INIIDLLLKT…GKKTYHRVKL (66 aa).

The protein belongs to the class-I aminoacyl-tRNA synthetase family. TyrS type 1 subfamily. In terms of assembly, homodimer.

The protein localises to the cytoplasm. It catalyses the reaction tRNA(Tyr) + L-tyrosine + ATP = L-tyrosyl-tRNA(Tyr) + AMP + diphosphate + H(+). Functionally, catalyzes the attachment of tyrosine to tRNA(Tyr) in a two-step reaction: tyrosine is first activated by ATP to form Tyr-AMP and then transferred to the acceptor end of tRNA(Tyr). The protein is Tyrosine--tRNA ligase of Acetivibrio thermocellus (strain ATCC 27405 / DSM 1237 / JCM 9322 / NBRC 103400 / NCIMB 10682 / NRRL B-4536 / VPI 7372) (Clostridium thermocellum).